Here is an 826-residue protein sequence, read N- to C-terminus: Lon protease (826 aa).

The region spanning 26-221 is the Lon N-terminal domain; sequence LPMLPVRDVV…AVNGFVSREV (196 aa). Residue 373 to 380 coordinates ATP; it reads GPPGVGKT. The Lon proteolytic domain maps to 609-790; the sequence is EPQIGLATGL…NEVLEKALLP (182 aa). Active-site residues include Ser-696 and Lys-739. Positions 788-826 are disordered; the sequence is LLPAEKKKAPPKKKPPKKAAKPKAKKTQPKAKTTEAADK. Positions 796 to 816 are enriched in basic residues; it reads APPKKKPPKKAAKPKAKKTQP.

The protein belongs to the peptidase S16 family. Homohexamer. Organized in a ring with a central cavity.

The protein resides in the cytoplasm. It carries out the reaction Hydrolysis of proteins in presence of ATP.. Its function is as follows. ATP-dependent serine protease that mediates the selective degradation of mutant and abnormal proteins as well as certain short-lived regulatory proteins. Required for cellular homeostasis and for survival from DNA damage and developmental changes induced by stress. Degrades polypeptides processively to yield small peptide fragments that are 5 to 10 amino acids long. Binds to DNA in a double-stranded, site-specific manner. This Desulfatibacillum aliphaticivorans protein is Lon protease.